A 243-amino-acid polypeptide reads, in one-letter code: Putative ABC transporter arginine-binding protein 2 (243 aa).

The N-terminal stretch at 1-19 (MKKVLIAALIAGFSLSATA) is a signal peptide.

Belongs to the bacterial solute-binding protein 3 family. As to quaternary structure, the complex is composed of two ATP-binding proteins (ArtP), two transmembrane proteins (ArtM and ArtQ) and two solute-binding proteins (ArtJ and ArtI).

It is found in the periplasm. In terms of biological role, part of the ABC transporter complex ArtPIQMJ involved in arginine transport. The protein is Putative ABC transporter arginine-binding protein 2 (artI) of Escherichia coli (strain K12).